A 256-amino-acid polypeptide reads, in one-letter code: Fructose-1,6-bisphosphatase/inositol-1-monophosphatase (256 aa).

Glutamate 65, aspartate 79, isoleucine 81, and aspartate 82 together coordinate Mg(2+). Substrate-binding positions include aspartate 82 to threonine 84, arginine 172, alanine 177, and arginine 196. Aspartate 201 is a Mg(2+) binding site.

The protein belongs to the inositol monophosphatase superfamily. FBPase class 4 family. As to quaternary structure, homotetramer. Mg(2+) is required as a cofactor.

The enzyme catalyses beta-D-fructose 1,6-bisphosphate + H2O = beta-D-fructose 6-phosphate + phosphate. It catalyses the reaction a myo-inositol phosphate + H2O = myo-inositol + phosphate. With respect to regulation, in contrast to mammalian I-1-P phosphatases, is only weakly inhibited by Li(+), since 50% inhibitory concentration for Li(+) is about 100 mM, and the Li(+) concentration required to totally abolish I-1-Pase activity is 1 M. Functionally, phosphatase with broad specificity; it can dephosphorylate fructose 1,6-bisphosphate, both D and L isomers of inositol-1-phosphate (I-1-P) but displaying a 20-fold higher rate of hydrolysis of D-I-1-P than of the L isomer, 2'-AMP, pNPP, inositol-2-phosphate, beta-glycerol phosphate, and alpha-D-glucose-1-phosphate. Cannot hydrolyze glucose-6-phosphate, fructose-6-phosphate, 5'-AMP and NAD(+). May be involved in the biosynthesis of a unique osmolyte, di-myo-inositol 1,1-phosphate. The polypeptide is Fructose-1,6-bisphosphatase/inositol-1-monophosphatase (suhB) (Thermotoga maritima (strain ATCC 43589 / DSM 3109 / JCM 10099 / NBRC 100826 / MSB8)).